A 170-amino-acid polypeptide reads, in one-letter code: Small ribosomal subunit protein uS5 (170 aa).

Positions 16–79 (IEDQLVAINR…EAGKKNMISV (64 aa)) constitute an S5 DRBM domain.

This sequence belongs to the universal ribosomal protein uS5 family. Part of the 30S ribosomal subunit. Contacts proteins S4 and S8.

In terms of biological role, with S4 and S12 plays an important role in translational accuracy. Located at the back of the 30S subunit body where it stabilizes the conformation of the head with respect to the body. In Lactobacillus delbrueckii subsp. bulgaricus (strain ATCC 11842 / DSM 20081 / BCRC 10696 / JCM 1002 / NBRC 13953 / NCIMB 11778 / NCTC 12712 / WDCM 00102 / Lb 14), this protein is Small ribosomal subunit protein uS5.